A 360-amino-acid polypeptide reads, in one-letter code: Biotin synthase (360 aa).

The disordered stretch occupies residues methionine 1–alanine 25. The 228-residue stretch at asparagine 58–arginine 285 folds into the Radical SAM core domain. Residues cysteine 73, cysteine 77, and cysteine 80 each contribute to the [4Fe-4S] cluster site. Residues cysteine 117, cysteine 148, cysteine 208, and arginine 280 each coordinate [2Fe-2S] cluster. Positions glutamine 340–aspartate 360 are disordered.

Belongs to the radical SAM superfamily. Biotin synthase family. Homodimer. The cofactor is [4Fe-4S] cluster. [2Fe-2S] cluster serves as cofactor.

The enzyme catalyses (4R,5S)-dethiobiotin + (sulfur carrier)-SH + 2 reduced [2Fe-2S]-[ferredoxin] + 2 S-adenosyl-L-methionine = (sulfur carrier)-H + biotin + 2 5'-deoxyadenosine + 2 L-methionine + 2 oxidized [2Fe-2S]-[ferredoxin]. It participates in cofactor biosynthesis; biotin biosynthesis; biotin from 7,8-diaminononanoate: step 2/2. Catalyzes the conversion of dethiobiotin (DTB) to biotin by the insertion of a sulfur atom into dethiobiotin via a radical-based mechanism. This chain is Biotin synthase, found in Ralstonia nicotianae (strain ATCC BAA-1114 / GMI1000) (Ralstonia solanacearum).